Reading from the N-terminus, the 354-residue chain is Dye-decolorizing peroxidase (354 aa).

Catalysis depends on D165, which acts as the Proton acceptor. H238 is a heme binding site. A targeting peptide region spans residues 312–335; that stretch reads GLFFSPTVDFLDDPPPLPAPGTPA. Positions 324–337 are enriched in pro residues; sequence DPPPLPAPGTPAAP. Residues 324-354 form a disordered region; it reads DPPPLPAPGTPAAPPARNGSLSIGSLKGTTR. The segment covering 342-354 has biased composition (polar residues); that stretch reads GSLSIGSLKGTTR.

The protein belongs to the DyP-type peroxidase family. As to quaternary structure, found in a complex with type 1 encapsulin, strongly suggesting it is found in a type 1 encapsulin nanocompartment. Homotetramer, presumably also in the type 1 encapsulin nanocompartment. Heme b serves as cofactor.

The protein resides in the encapsulin nanocompartment. It is found in the cell membrane. The catalysed reaction is 2 a phenolic donor + H2O2 = 2 a phenolic radical donor + 2 H2O. In terms of biological role, cargo protein of a type 1 encapsulin nanocompartment. A heme-dependent peroxidase. This cargo-loaded encapsulin nanocompartment is probably involved in protection against oxidative damage. This chain is Dye-decolorizing peroxidase, found in Mycolicibacterium paratuberculosis (strain ATCC BAA-968 / K-10) (Mycobacterium paratuberculosis).